A 506-amino-acid polypeptide reads, in one-letter code: Maturase K (506 aa).

Belongs to the intron maturase 2 family. MatK subfamily.

The protein localises to the plastid. It is found in the chloroplast. In terms of biological role, usually encoded in the trnK tRNA gene intron. Probably assists in splicing its own and other chloroplast group II introns. This Lathyrus tingitanus (Tangier pea) protein is Maturase K.